Consider the following 341-residue polypeptide: Gibberellin 2-beta-dioxygenase 5 (341 aa).

Residues 187 to 290 form the Fe2OG dioxygenase domain; that stretch reads REETCFLRLN…RFSMAFFLCP (104 aa). Tyr198 contributes to the 2-oxoglutarate binding site. Fe cation-binding residues include His213, Asp215, and His271. Residues Arg281 and Ser283 each contribute to the 2-oxoglutarate site.

This sequence belongs to the iron/ascorbate-dependent oxidoreductase family. GA2OX subfamily. L-ascorbate is required as a cofactor. Requires Fe(2+) as cofactor. In terms of tissue distribution, expressed in roots, leaves, culms, leaf sheaths and young panicles.

Its subcellular location is the cytoplasm. It localises to the nucleus. It carries out the reaction gibberellin A1 + 2-oxoglutarate + O2 = gibberellin A8 + succinate + CO2. The protein operates within plant hormone biosynthesis; gibberellin biosynthesis. Functionally, catalyzes the 2-beta-hydroxylation of several biologically active gibberellins (GAs), leading to the homeostatic regulation of their endogenous level. Catabolism of GAs plays a central role in plant development. In vitro, converts GA12 and GA53 to the corresponding 2-beta-hydroxylated products GA110 and GA97, respectively. In Oryza sativa subsp. japonica (Rice), this protein is Gibberellin 2-beta-dioxygenase 5.